The primary structure comprises 29 residues: Protamine-like protein (29 aa).

The disordered stretch occupies residues M1–R29. Positions P12 to R29 are enriched in basic and acidic residues.

In Escherichia coli (strain K12), this protein is Protamine-like protein (tpr).